We begin with the raw amino-acid sequence, 299 residues long: Tetrahydromethanopterin S-methyltransferase subunit E (299 aa).

6 helical membrane passes run 57–77 (AISGEPVSYGLYVAVAGSVAW), 80–100 (INAGLNAVLALIIGSGVAAIV), 133–153 (IGPIVGHGFIAVFTMVLAAYL), 158–178 (LGNPFPLPLVALIFGITVGAI), 237–257 (GLCFGLIIFLDGWRSIVGNII), and 261–281 (LVTKTSIALVVGLLVVVAAMI).

Belongs to the MtrE family. The complex is composed of 8 subunits; MtrA, MtrB, MtrC, MtrD, MtrE, MtrF, MtrG and MtrH.

The protein resides in the cell membrane. The enzyme catalyses 5-methyl-5,6,7,8-tetrahydromethanopterin + coenzyme M + 2 Na(+)(in) = 5,6,7,8-tetrahydromethanopterin + methyl-coenzyme M + 2 Na(+)(out). The protein operates within one-carbon metabolism; methanogenesis from CO(2); methyl-coenzyme M from 5,10-methylene-5,6,7,8-tetrahydromethanopterin: step 2/2. Part of a complex that catalyzes the formation of methyl-coenzyme M and tetrahydromethanopterin from coenzyme M and methyl-tetrahydromethanopterin. This is an energy-conserving, sodium-ion translocating step. The chain is Tetrahydromethanopterin S-methyltransferase subunit E from Methanococcus vannielii (strain ATCC 35089 / DSM 1224 / JCM 13029 / OCM 148 / SB).